A 452-amino-acid polypeptide reads, in one-letter code: Chaperone SurA (452 aa).

Residues 1–28 form the signal peptide; that stretch reads MKKTLRFAAVVSSLAAASALLAAAPAAA. 2 consecutive PpiC domains span residues 186-288 and 302-400; these read QQDL…RLVD and IVQT…QVLS.

It is found in the periplasm. It carries out the reaction [protein]-peptidylproline (omega=180) = [protein]-peptidylproline (omega=0). In terms of biological role, chaperone involved in the correct folding and assembly of outer membrane proteins. Recognizes specific patterns of aromatic residues and the orientation of their side chains, which are found more frequently in integral outer membrane proteins. May act in both early periplasmic and late outer membrane-associated steps of protein maturation. The sequence is that of Chaperone SurA from Burkholderia lata (strain ATCC 17760 / DSM 23089 / LMG 22485 / NCIMB 9086 / R18194 / 383).